A 242-amino-acid polypeptide reads, in one-letter code: ATP synthase subunit a (242 aa).

7 consecutive transmembrane segments (helical) span residues 23 to 43 (ISFT…AVLL), 62 to 82 (VELI…VGGL), 84 to 104 (YIPF…IGIL), 113 to 133 (HVSV…VLGF), 143 to 163 (IFLP…IKLF), 176 to 196 (LAAN…FVLK), and 201 to 221 (LAPL…FVAI).

Belongs to the ATPase A chain family. F-type ATPases have 2 components, CF(1) - the catalytic core - and CF(0) - the membrane proton channel. CF(1) has five subunits: alpha(3), beta(3), gamma(1), delta(1), epsilon(1). CF(0) has three main subunits: a(1), b(2) and c(9-12). The alpha and beta chains form an alternating ring which encloses part of the gamma chain. CF(1) is attached to CF(0) by a central stalk formed by the gamma and epsilon chains, while a peripheral stalk is formed by the delta and b chains.

Its subcellular location is the cell inner membrane. Key component of the proton channel; it plays a direct role in the translocation of protons across the membrane. The polypeptide is ATP synthase subunit a (Anaplasma phagocytophilum (strain HZ)).